A 153-amino-acid chain; its full sequence is Large ribosomal subunit protein uL22 (153 aa).

Belongs to the universal ribosomal protein uL22 family. Part of the 50S ribosomal subunit.

In terms of biological role, this protein binds specifically to 23S rRNA. It makes multiple contacts with different domains of the 23S rRNA in the assembled 50S subunit and ribosome. Functionally, the globular domain of the protein is located near the polypeptide exit tunnel on the outside of the subunit, while an extended beta-hairpin is found that lines the wall of the exit tunnel in the center of the 70S ribosome. This is Large ribosomal subunit protein uL22 from Methanocella arvoryzae (strain DSM 22066 / NBRC 105507 / MRE50).